The chain runs to 211 residues: Redox-sensing transcriptional repressor Rex (211 aa).

Positions Leu-17 to Phe-56 form a DNA-binding region, H-T-H motif. Gly-91–Gly-96 is a binding site for NAD(+).

It belongs to the transcriptional regulatory Rex family. As to quaternary structure, homodimer.

The protein resides in the cytoplasm. Its function is as follows. Modulates transcription in response to changes in cellular NADH/NAD(+) redox state. The chain is Redox-sensing transcriptional repressor Rex from Lysinibacillus sphaericus (strain C3-41).